A 357-amino-acid polypeptide reads, in one-letter code: tRNA N6-adenosine threonylcarbamoyltransferase (357 aa).

Positions 120 and 124 each coordinate Fe cation. Residues 143 to 147, D176, G189, and N289 each bind substrate; that span reads LVSGG. D317 provides a ligand contact to Fe cation.

It belongs to the KAE1 / TsaD family. Fe(2+) is required as a cofactor.

The protein resides in the cytoplasm. It carries out the reaction L-threonylcarbamoyladenylate + adenosine(37) in tRNA = N(6)-L-threonylcarbamoyladenosine(37) in tRNA + AMP + H(+). Its function is as follows. Required for the formation of a threonylcarbamoyl group on adenosine at position 37 (t(6)A37) in tRNAs that read codons beginning with adenine. Is involved in the transfer of the threonylcarbamoyl moiety of threonylcarbamoyl-AMP (TC-AMP) to the N6 group of A37, together with TsaE and TsaB. TsaD likely plays a direct catalytic role in this reaction. The chain is tRNA N6-adenosine threonylcarbamoyltransferase from Polynucleobacter necessarius subsp. necessarius (strain STIR1).